Consider the following 187-residue polypeptide: Ribosome-recycling factor (187 aa).

The protein belongs to the RRF family.

The protein localises to the cytoplasm. Functionally, responsible for the release of ribosomes from messenger RNA at the termination of protein biosynthesis. May increase the efficiency of translation by recycling ribosomes from one round of translation to another. This chain is Ribosome-recycling factor, found in Xanthobacter autotrophicus (strain ATCC BAA-1158 / Py2).